The following is a 964-amino-acid chain: Adhesion defective protein 3 (964 aa).

The tract at residues 1–32 is disordered; that stretch reads MADFMDIEPSSHSAKASQYESSAPASSSLGNS. The segment covering 16 to 32 has biased composition (low complexity); sequence ASQYESSAPASSSLGNS. Residues 34–66 enclose the LisH domain; sequence PNESLDYYIYDYFVKHNFEEAAQAFLRESKIQI. Positions 69 to 83 are enriched in low complexity; the sequence is SSSSTAFSPSNNNAP. Disordered stretches follow at residues 69 to 125, 241 to 273, 476 to 523, 572 to 596, and 664 to 914; these read SSSS…EETN, PKGT…PASA, VSMK…TSRM, QTLS…MSMD, and APMI…KPIS. 3 stretches are compositionally biased toward polar residues: residues 93–103, 261–270, and 508–523; these read LASPSKISESI, AMQNPHNSFP, and TQAN…TSRM. The segment covering 575-589 has biased composition (low complexity); it reads SSGNQPPQQSGPNPN. Composition is skewed to polar residues over residues 664-700, 707-716, 724-752, 767-801, 818-828, and 857-868; these read APMI…TNRN, SPHQQFSPSA, RSMS…QNKE, AFPQ…SSLH, TIRTTERSTFS, and GGTNSISQDTTQ. A compositionally biased stretch (low complexity) spans 869-885; it reads SLQMQSNSVNSSSMVDA. Residues 894 to 905 are compositionally biased toward polar residues; that stretch reads GDTSALDSNAKN.

This sequence belongs to the FLO8 family.

It is found in the cytoplasm. The protein localises to the nucleus. Its function is as follows. Probable transcriptional regulator involved in cell adhesion. In Schizosaccharomyces pombe (strain 972 / ATCC 24843) (Fission yeast), this protein is Adhesion defective protein 3 (adn3).